The sequence spans 206 residues: Ras-related protein RABG3e (206 aa).

Position 15–22 (15–22 (GDSGVGKT)) interacts with GTP. The Effector region signature appears at 37–45 (YKATIGADF). GTP-binding positions include 63 to 67 (DTAGQ), 125 to 128 (NKID), and 158 to 159 (SA). Residues cysteine 204 and cysteine 206 are each lipidated (S-geranylgeranyl cysteine). Position 206 is a cysteine methyl ester (cysteine 206).

The protein belongs to the small GTPase superfamily. Rab family.

It is found in the cell membrane. Intracellular vesicle trafficking and protein transport. May play a role in adaptation to stress by recylcing macromolecules in specific cellular compartments. The protein is Ras-related protein RABG3e (RABG3E) of Arabidopsis thaliana (Mouse-ear cress).